Here is a 215-residue protein sequence, read N- to C-terminus: Ribonuclease T (215 aa).

Residues 20–194 enclose the Exonuclease domain; it reads VVIDVETAGF…YDTLQTAKLF (175 aa). Mg(2+)-binding residues include D23, E25, H181, and D186. The active-site Proton donor/acceptor is H181.

The protein belongs to the RNase T family. As to quaternary structure, homodimer. The cofactor is Mg(2+).

Functionally, trims short 3' overhangs of a variety of RNA species, leaving a one or two nucleotide 3' overhang. Responsible for the end-turnover of tRNA: specifically removes the terminal AMP residue from uncharged tRNA (tRNA-C-C-A). Also appears to be involved in tRNA biosynthesis. This is Ribonuclease T from Yersinia pseudotuberculosis serotype I (strain IP32953).